Reading from the N-terminus, the 35-residue chain is Cytochrome b6-f complex subunit 7 (35 aa).

A helical transmembrane segment spans residues 9–27 (AGLSIVLTLVGVALGYGIL).

This sequence belongs to the PetM family. In terms of assembly, the 4 large subunits of the cytochrome b6-f complex are cytochrome b6, subunit IV (17 kDa polypeptide, PetD), cytochrome f and the Rieske protein, while the 4 small subunits are PetG, PetL, PetM and PetN. The complex functions as a dimer.

It localises to the cellular thylakoid membrane. Functionally, component of the cytochrome b6-f complex, which mediates electron transfer between photosystem II (PSII) and photosystem I (PSI), cyclic electron flow around PSI, and state transitions. This chain is Cytochrome b6-f complex subunit 7, found in Synechococcus sp. (strain JA-3-3Ab) (Cyanobacteria bacterium Yellowstone A-Prime).